Consider the following 312-residue polypeptide: Protoheme IX farnesyltransferase (312 aa).

The next 8 membrane-spanning stretches (helical) occupy residues 12–32 (LALT…PAML), 41–61 (FGLI…ANTF), 93–113 (VFAW…CHSW), 114–134 (LAAG…TKWL), 141–161 (NVIW…AVIT), 168–188 (FHAG…IFFW), 240–260 (VPAA…WFII), and 290–310 (ILFV…AHAV).

The protein belongs to the UbiA prenyltransferase family. Protoheme IX farnesyltransferase subfamily.

The protein resides in the cell membrane. The catalysed reaction is heme b + (2E,6E)-farnesyl diphosphate + H2O = Fe(II)-heme o + diphosphate. It functions in the pathway porphyrin-containing compound metabolism; heme O biosynthesis; heme O from protoheme: step 1/1. Converts heme B (protoheme IX) to heme O by substitution of the vinyl group on carbon 2 of heme B porphyrin ring with a hydroxyethyl farnesyl side group. In Corynebacterium jeikeium (strain K411), this protein is Protoheme IX farnesyltransferase.